The following is a 583-amino-acid chain: 2-succinyl-5-enolpyruvyl-6-hydroxy-3-cyclohexene-1-carboxylate synthase (583 aa).

This sequence belongs to the TPP enzyme family. MenD subfamily. As to quaternary structure, homodimer. Mg(2+) is required as a cofactor. It depends on Mn(2+) as a cofactor. The cofactor is thiamine diphosphate.

It carries out the reaction isochorismate + 2-oxoglutarate + H(+) = 5-enolpyruvoyl-6-hydroxy-2-succinyl-cyclohex-3-ene-1-carboxylate + CO2. It participates in quinol/quinone metabolism; 1,4-dihydroxy-2-naphthoate biosynthesis; 1,4-dihydroxy-2-naphthoate from chorismate: step 2/7. Its pathway is cofactor biosynthesis; phylloquinone biosynthesis. In terms of biological role, catalyzes the thiamine diphosphate-dependent decarboxylation of 2-oxoglutarate and the subsequent addition of the resulting succinic semialdehyde-thiamine pyrophosphate anion to isochorismate to yield 2-succinyl-5-enolpyruvyl-6-hydroxy-3-cyclohexene-1-carboxylate (SEPHCHC). This chain is 2-succinyl-5-enolpyruvyl-6-hydroxy-3-cyclohexene-1-carboxylate synthase, found in Nostoc sp. (strain PCC 7120 / SAG 25.82 / UTEX 2576).